Consider the following 138-residue polypeptide: F-box protein At4g12382 (138 aa).

Residues 7 to 53 form the F-box domain; it reads NPSFADLPSSLIEVIMSHLALKNNIRASAACKSWYEVGVSVRVVEKH.

The chain is F-box protein At4g12382 from Arabidopsis thaliana (Mouse-ear cress).